The primary structure comprises 211 residues: Protein GrpE (211 aa).

Residues 1-10 are compositionally biased toward basic and acidic residues; that stretch reads MTDDTKKPGP. Disordered regions lie at residues 1 to 37 and 187 to 211; these read MTDD…PDPV and AKGG…EKDA. A compositionally biased stretch (acidic residues) spans 27–36; the sequence is EQAETAEPDP. A compositionally biased stretch (polar residues) spans 201-211; the sequence is PGTSSLNEKDA.

Belongs to the GrpE family. Homodimer.

It is found in the cytoplasm. Its function is as follows. Participates actively in the response to hyperosmotic and heat shock by preventing the aggregation of stress-denatured proteins, in association with DnaK and GrpE. It is the nucleotide exchange factor for DnaK and may function as a thermosensor. Unfolded proteins bind initially to DnaJ; upon interaction with the DnaJ-bound protein, DnaK hydrolyzes its bound ATP, resulting in the formation of a stable complex. GrpE releases ADP from DnaK; ATP binding to DnaK triggers the release of the substrate protein, thus completing the reaction cycle. Several rounds of ATP-dependent interactions between DnaJ, DnaK and GrpE are required for fully efficient folding. This chain is Protein GrpE, found in Agrobacterium fabrum (strain C58 / ATCC 33970) (Agrobacterium tumefaciens (strain C58)).